A 387-amino-acid polypeptide reads, in one-letter code: 3-hydroxyisobutyryl-CoA hydrolase-like protein 5 (387 aa).

The residue at position 2 (Ala-2) is an N-acetylalanine.

This sequence belongs to the enoyl-CoA hydratase/isomerase family.

In Arabidopsis thaliana (Mouse-ear cress), this protein is 3-hydroxyisobutyryl-CoA hydrolase-like protein 5.